Consider the following 307-residue polypeptide: Taste receptor type 2 member 10 (307 aa).

Over 1-6 (MLRVVE) the chain is Extracellular. Residues 7-27 (GIFIFVVISEXVFGVLGNGFI) traverse the membrane as a helical segment. At 28-42 (GLVNCIDCAKNKLST) the chain is on the cytoplasmic side. Residues 43 to 63 (IGFILTGLAISRIFLIWIIIT) form a helical membrane-spanning segment. The Extracellular portion of the chain corresponds to 64-100 (DGFIQIFSPDIYASGNLIEYISYFWVIGNQSSMWFAT). N92 carries an N-linked (GlcNAc...) asparagine glycan. The chain crosses the membrane as a helical span at residues 101–121 (SLSIFYFLKIANFSNYIFLWL). Residues 122–126 (KSRTN) are Cytoplasmic-facing. A helical membrane pass occupies residues 127–147 (MVLPFMIVFLLISSLLNFAHI). Topologically, residues 148–179 (AKILNDYKMKNDTVWDLNMYKSEYFIKQILLN) are extracellular. Residue N158 is glycosylated (N-linked (GlcNAc...) asparagine). The chain crosses the membrane as a helical span at residues 180–200 (LGVIFFFTLSLITCVFLIISL). The Cytoplasmic segment spans residues 201–227 (WRHNRQMQSNVTGLRDSNTEAHVKAMK). A helical transmembrane segment spans residues 228–248 (VLISFXILFILYFIGMAIEIS). Over 249-257 (CFTVRENKL) the chain is Extracellular. A helical transmembrane segment spans residues 258–278 (LLMFGMTTTAIYPWGHSFILI). Topologically, residues 279–307 (LGNSKLKQASLRVLQQLKCCEKRKNLRVT) are cytoplasmic.

This sequence belongs to the G-protein coupled receptor T2R family.

It localises to the membrane. Functionally, receptor that may play a role in the perception of bitterness and is gustducin-linked. May play a role in sensing the chemical composition of the gastrointestinal content. The activity of this receptor may stimulate alpha gustducin, mediate PLC-beta-2 activation and lead to the gating of TRPM5. This is Taste receptor type 2 member 10 (TAS2R10) from Gorilla gorilla gorilla (Western lowland gorilla).